The chain runs to 686 residues: Putative xyloglucan glycosyltransferase 10 (686 aa).

The next 2 membrane-spanning stretches (helical) occupy residues L114 to A134 and A160 to V180. The active site involves D267. Substrate contacts are provided by D326 and D328. The active site involves D420. Transmembrane regions (helical) follow at residues L498–I518, L523–A543, E640–L656, and I661–I681.

The protein belongs to the glycosyltransferase 2 family. Plant cellulose synthase-like C subfamily.

It is found in the golgi apparatus membrane. Its function is as follows. Probable beta-1,4-glucan synthase rather involved in the synthesis of the xyloglucan backbone than cellulose. Seems to work simultaneously with xyloglucan 6-xylosyltransferase. Xyloglucan is a noncellulosic polysaccharides of plant cell wall and consists of a glucan backbone substituted by xylose, galactose and fucose. This chain is Putative xyloglucan glycosyltransferase 10 (CSLC10), found in Oryza sativa subsp. indica (Rice).